A 109-amino-acid chain; its full sequence is V-type proton ATPase 16 kDa proteolipid subunit (109 aa).

Residues 1–20 (VPVVMAGVLGIYGLIIAVII) form a helical membrane-spanning segment. Over 21-39 (STGINPKAKPYYLFDGYAH) the chain is Lumenal. A helical transmembrane segment spans residues 40–61 (LSSGLACGLAGLAAGMAIGIVG). Residues 62-73 (DAGVRANAQQPK) are Cytoplasmic-facing. Residues 74–99 (LFVGMILILIFAEALALYGLIVGIIL) form a helical membrane-spanning segment. The Lumenal portion of the chain corresponds to 100–109 (SSRAGQSRAD).

The protein belongs to the V-ATPase proteolipid subunit family. In terms of assembly, V-ATPase is a heteromultimeric enzyme composed of a peripheral catalytic V1 complex (main components: subunits A, B, C, D, E, and F) attached to an integral membrane V0 proton pore complex (main component: the proteolipid protein; which is present as a hexamer that forms the proton-conducting pore). As to expression, high expression in the mesocotyl tip of etiolated seedlings compared to the base.

It is found in the vacuole membrane. In terms of biological role, proton-conducting pore forming subunit of the membrane integral V0 complex of vacuolar ATPase. V-ATPase is responsible for acidifying a variety of intracellular compartments in eukaryotic cells. This chain is V-type proton ATPase 16 kDa proteolipid subunit, found in Zea mays (Maize).